The following is a 499-amino-acid chain: Neuropeptide CCHamide-1 receptor (499 aa).

The Extracellular segment spans residues 1-85 (MIANLVSMET…GRRPETYIVP (85 aa)). N-linked (GlcNAc...) asparagine glycosylation is found at asparagine 33 and asparagine 61. The helical transmembrane segment at 86–106 (ILFALIFVVGVLGNGTLIVVF) threads the bilayer. Topologically, residues 107–117 (LSVRQMRNVPN) are cytoplasmic. Residues 118–138 (TYILSLALADLLVIITTVPLA) form a helical membrane-spanning segment. Topologically, residues 139–162 (STVYTVEYWPYGSFLCSLSEFMKD) are extracellular. A disulfide bridge connects residues cysteine 154 and cysteine 240. Residues 163–183 (VSIGVSVFTLTALSGDRYFAI) traverse the membrane as a helical segment. Over 184 to 203 (VDPLRKFHAHGGGRRATRMT) the chain is Cytoplasmic. Residues 204-224 (LATAVSIWLLAILCGLPALIG) traverse the membrane as a helical segment. Over 225-259 (SNLKHLGINEKSIVICYPYPEEWGINYAKSMVLLH) the chain is Extracellular. The chain crosses the membrane as a helical span at residues 260–280 (FLVYYAIPLVVIAVFYVLIAL). The Cytoplasmic segment spans residues 281-309 (HLMYSASVPGEIQGAVRQVRARRKVAVTV). Residues 310 to 330 (LAFVVIFGICFLPYHVFFLWF) form a helical membrane-spanning segment. Over 331-348 (YFWPTAQDDYNAFWHVLR) the chain is Extracellular. A helical membrane pass occupies residues 349–369 (IVAYCMSFANSCANPVALYFV). Residues 370-499 (SGAFRKHFNR…PAKFQESLLN (130 aa)) are Cytoplasmic-facing.

This sequence belongs to the G-protein coupled receptor 1 family. Low levels in larval brain and gut with higher levels in adult brain and gut. In the brain expression is widely distributed, including strong expression in the mushroom bodies. Expressed weakly in s-LNv (small ventral lateral neurons) and strongly in l-LNv (large ventral lateral neurons), but not in other clock neurons.

Its subcellular location is the cell membrane. In terms of biological role, receptor for the neuropeptide CCHamide-1. Plays a role in the modulation of starvation-induced olfactory behavior where starved flies show increased responsiveness to food odorants, repellants and pheromones. Contributes to regulation of sleep latency (the time required to fall asleep), amount of sleep and depth of sleep (arousability). Involved in modulation of PDP1 and PDF levels in s-LNv (small ventral lateral neurons) clock neurons in response to CCHa1 released by DN1a (anterior dorsal neurons 1) clock neurons, to regulate morning activity. In a subset of dopaminergic cells in the protocerebral anterior medial (PAM) cluster involved in suppressing arousability in response to CCHa1 secreted by gut enteroendocrine cells. The chain is Neuropeptide CCHamide-1 receptor from Drosophila melanogaster (Fruit fly).